A 198-amino-acid polypeptide reads, in one-letter code: Guanylate kinase (198 aa).

One can recognise a Guanylate kinase-like domain in the interval 8-188 (GRVVVLSGPS…ACSELVSLLV (181 aa)). Residue 15–22 (GPSAVGKS) participates in ATP binding.

It belongs to the guanylate kinase family.

The protein localises to the cytoplasm. The enzyme catalyses GMP + ATP = GDP + ADP. Its function is as follows. Essential for recycling GMP and indirectly, cGMP. This chain is Guanylate kinase, found in Mycobacterium sp. (strain MCS).